The chain runs to 199 residues: Streptomycin biosynthesis protein StrG (199 aa).

Its pathway is antibiotic biosynthesis; streptomycin biosynthesis. Its function is as follows. May be involved in the formation of N-methyl-L-glucosamine. This Streptomyces griseus protein is Streptomycin biosynthesis protein StrG (strG).